The sequence spans 66 residues: MKAKEIRDLTTAEIEQKIKSLKEELFNLRFQLATGQLENTARIRQVRKDIARMKTIIRERELAANK.

This sequence belongs to the universal ribosomal protein uL29 family.

The chain is Large ribosomal subunit protein uL29 from Geobacillus thermodenitrificans (strain NG80-2).